A 334-amino-acid chain; its full sequence is Procathepsin L (334 aa).

Positions 1 to 17 are cleaved as a signal peptide; it reads MTPLLLLAVLCLGTALA. Positions 18–113 are cleaved as a propeptide — activation peptide; that stretch reads TPKFDQTFNA…RLFQEPLMLQ (96 aa). A Zn(2+)-binding site is contributed by glutamate 122. Cystine bridges form between cysteine 135-cysteine 178 and cysteine 169-cysteine 211. Cysteine 138 is a catalytic residue. Positions 163, 184, 199, 205, 227, 250, 253, 273, and 275 each coordinate Zn(2+). A disulfide bridge connects residues cysteine 269 and cysteine 322. Residue histidine 276 is part of the active site. Positions 289-290 are excised as a propeptide; the sequence is DS. Asparagine 300 is a catalytic residue.

Belongs to the peptidase C1 family. As to quaternary structure, dimer of a heavy and a light chain linked by disulfide bonds. Interacts with Long isoform of CD74/Ii chain; the interaction stabilizes the conformation of mature CTSL. During export along the endocytic pathway, pro-CTSL undergoes several proteolytic cleavages to generate the CTSL single-chain and two-chain mature forms, composed of a heavy chain linked to a light chain by disulfide bonds. Autocleavage; produces the single-chain CTSL after cleavage of the propeptide. The cleavage can be intermolecular. Both mature cathepsin L1 and procathepsin L are found in the upper epidermis. The lower epidermis predominantly contains procathepsin L. In seminiferous tubules expression is greater at stages VI-VII than at stages IX-XII.

It is found in the lysosome. The protein localises to the apical cell membrane. The protein resides in the cytoplasmic vesicle. It localises to the secretory vesicle. Its subcellular location is the chromaffin granule. It is found in the secreted. The protein localises to the extracellular space. The catalysed reaction is Specificity close to that of papain. As compared to cathepsin B, cathepsin L exhibits higher activity toward protein substrates, but has little activity on Z-Arg-Arg-NHMec, and no peptidyl-dipeptidase activity.. Its activity is regulated as follows. Inhibited by the propeptide produced by autocleavage. Long isoform of CD74/Ii chain stabilizes the conformation of mature CTSL by binding to its active site and serving as a chaperone to help maintain a pool of mature enzyme in endocytic compartments and extracellular space of APCs. IFNG enhances the conversion into the CTSL mature and active form. Inhibited by CST6. Inhibited by the glycopeptide antibiotic teicoplanin. Inhibited by amantadine. Functionally, thiol protease important for the overall degradation of proteins in lysosomes. Plays a critical for normal cellular functions such as general protein turnover, antigen processing and bone remodeling. Involved in the solubilization of cross-linked TG/thyroglobulin and in the subsequent release of thyroid hormone thyroxine (T4) by limited proteolysis of TG/thyroglobulin in the thyroid follicle lumen. In neuroendocrine chromaffin cells secretory vesicles, catalyzes the prohormone proenkephalin processing to the active enkephalin peptide neurotransmitter. In thymus, regulates CD4(+) T cell positive selection by generating the major histocompatibility complex class II (MHCII) bound peptide ligands presented by cortical thymic epithelial cells. Also mediates invariant chain processing in cortical thymic epithelial cells. Major elastin-degrading enzyme at neutral pH. Accumulates as a mature and active enzyme in the extracellular space of antigen presenting cells (APCs) to regulate degradation of the extracellular matrix in the course of inflammation. Secreted form generates endostatin from COL18A1. Critical for cardiac morphology and function. Plays an important role in hair follicle morphogenesis and cycling, as well as epidermal differentiation. Required for maximal stimulation of steroidogenesis by TIMP1. This chain is Procathepsin L, found in Rattus norvegicus (Rat).